A 176-amino-acid polypeptide reads, in one-letter code: Large ribosomal subunit protein uL6 (176 aa).

The protein belongs to the universal ribosomal protein uL6 family. Part of the 50S ribosomal subunit.

In terms of biological role, this protein binds to the 23S rRNA, and is important in its secondary structure. It is located near the subunit interface in the base of the L7/L12 stalk, and near the tRNA binding site of the peptidyltransferase center. This is Large ribosomal subunit protein uL6 from Paraburkholderia phymatum (strain DSM 17167 / CIP 108236 / LMG 21445 / STM815) (Burkholderia phymatum).